Reading from the N-terminus, the 129-residue chain is NHP2-like protein 1 homolog (129 aa).

The protein belongs to the eukaryotic ribosomal protein eL8 family.

It is found in the nucleus. The protein resides in the nucleolus. Its function is as follows. Binds to the 5'-stem-loop of U4 snRNA and may play a role in the late stage of spliceosome assembly. The protein undergoes a conformational change upon RNA-binding. This is NHP2-like protein 1 homolog from Dictyostelium discoideum (Social amoeba).